Consider the following 234-residue polypeptide: 2-amino-5-formylamino-6-ribosylaminopyrimidin-4(3H)-one 5'-monophosphate deformylase (234 aa).

Positions 29, 31, 40, and 109 each coordinate Fe cation.

Belongs to the creatininase superfamily. FAPy deformylase family. Homodimer. The cofactor is Fe(2+). Requires Zn(2+) as cofactor.

It catalyses the reaction 2-amino-5-formylamino-6-(5-phospho-D-ribosylamino)pyrimidin-4(3H)-one + H2O = 2,5-diamino-6-(1-D-ribosylamino)pyrimidin-4(3H)-one 5'-phosphate + formate + H(+). The protein operates within cofactor biosynthesis; coenzyme F420 biosynthesis. It participates in cofactor biosynthesis; riboflavin biosynthesis. Its function is as follows. Catalyzes the hydrolysis of the formamide of 2-amino-5-formylamino-6-ribosylamino-4(3H)-pyrimidinone 5'-monophosphate (FAPy) to form 2,5-diamino-6-ribosylamino-4(3H)-pyrimidinone 5'-phosphate (APy). The polypeptide is 2-amino-5-formylamino-6-ribosylaminopyrimidin-4(3H)-one 5'-monophosphate deformylase (Methanobrevibacter ruminantium (strain ATCC 35063 / DSM 1093 / JCM 13430 / OCM 146 / M1) (Methanobacterium ruminantium)).